Consider the following 554-residue polypeptide: Inactive serine/threonine-protein kinase/endoribonuclease IRE1-like (554 aa).

The signal sequence occupies residues 1 to 17 (MWLLAISLVGLLVVVVC). A disordered region spans residues 36–85 (KRDKNSAPRVSASGEDGTKNEQVEKKSDPSGGLGEENEKTNSESKVLSVP). Basic and acidic residues predominate over residues 51 to 63 (DGTKNEQVEKKSD). A Protein kinase domain is found at 121–408 (LVSTNEMKYG…ATQVLLHPLF (288 aa)). Lys150 contributes to the ATP binding site. One can recognise a KEN domain in the interval 411–554 (SEKRLFFLRE…GEEAFEKYFN (144 aa)).

The protein belongs to the protein kinase superfamily. Ser/Thr protein kinase family.

The protein is Inactive serine/threonine-protein kinase/endoribonuclease IRE1-like of Arabidopsis thaliana (Mouse-ear cress).